Consider the following 407-residue polypeptide: O-methyltransferase verK (407 aa).

Residues Glu263 and 295 to 297 each bind S-adenosyl-L-methionine; that span reads GDF. The active-site Proton acceptor is the His314.

Belongs to the class I-like SAM-binding methyltransferase superfamily. Cation-independent O-methyltransferase family.

It participates in mycotoxin biosynthesis. In terms of biological role, O-methyltransferase; part of the gene cluster that mediates the biosynthesis of 11'-deoxyverticillin A, one of the dimeric epipolythiodioxopiperazines (ETPs) from the verticillin family that act as mycotoxins. 11'-deoxyverticillin A is required for normal conidiation. The nonribosomal peptide synthetase verP is speculated to be responsible for condensation of amino acids to form the carbon skeleton of verticillin, whereas the cluster-specific tailoring enzymes are involved in further modifications leading to the production of 11'-deoxyverticillin A. The sequence is that of O-methyltransferase verK from Clonostachys rogersoniana.